We begin with the raw amino-acid sequence, 184 residues long: Ribosome-recycling factor (184 aa).

Belongs to the RRF family.

The protein localises to the cytoplasm. Responsible for the release of ribosomes from messenger RNA at the termination of protein biosynthesis. May increase the efficiency of translation by recycling ribosomes from one round of translation to another. The polypeptide is Ribosome-recycling factor (Aster yellows witches'-broom phytoplasma (strain AYWB)).